Reading from the N-terminus, the 699-residue chain is Cyclic AMP-dependent transcription factor ATF-6 beta (699 aa).

N-acetylalanine is present on Ala2. Topologically, residues 2 to 393 are cytoplasmic; it reads AELMLLSEIA…GLKLGSGNRK (392 aa). 3 disordered regions span residues 59 to 114, 218 to 246, and 290 to 313; these read SLDV…QVPG, VQIS…PKPV, and EGPA…PGNS. The span at 68-78 shows a compositional bias: pro residues; the sequence is PPEPPWDPLPI. Low complexity predominate over residues 86–109; the sequence is SEPSSPCSSSSLSSESSHLSTEPP. Residues 322 to 385 form the bZIP domain; that stretch reads LLKRQQRMIK…EALLAENSGL (64 aa). The interval 324–344 is basic motif; it reads KRQQRMIKNRESACQSRRKKK. A leucine-zipper region spans residues 347 to 354; that stretch reads LQGLEARL. Residues 394-414 form a helical; Signal-anchor for type II membrane protein membrane-spanning segment; that stretch reads VVCIMVFLLFIAFNFGPVSIS. Over 415–699 the chain is Lumenal; sequence EPPPAPMSPR…ASQPLYLNHP (285 aa). A disordered region spans residues 417-474; that stretch reads PPAPMSPRMSREEPRPQRHLLGFSEPGPAHGMEPLREAAQSPGEQQPSSAGRPSFRNL. Over residues 458–467 the composition is skewed to polar residues; it reads PGEQQPSSAG. Residues Asn473 and Asn502 are each glycosylated (N-linked (GlcNAc...) asparagine). Over residues 519–529 the composition is skewed to basic residues; that stretch reads RHQRGRRKIPH. The segment at 519 to 563 is disordered; it reads RHQRGRRKIPHRAQERQKSQLRKKSPPVKPVPTQPPGPPERDPVG. A compositionally biased stretch (pro residues) spans 545 to 556; it reads PVKPVPTQPPGP. 3 N-linked (GlcNAc...) asparagine glycosylation sites follow: Asn607, Asn624, and Asn673. Residues 657 to 699 form a disordered region; it reads STVPPSLRKQPSPSPGNTTGGPLPGSAASPAHQASQPLYLNHP. The span at 680 to 693 shows a compositional bias: low complexity; sequence PGSAASPAHQASQP.

The protein belongs to the bZIP family. ATF subfamily. Homodimer and heterodimer with ATF6-alpha. The dimer interacts with the nuclear transcription factor Y (NF-Y) trimer through direct binding to NF-Y subunit C (NF-YC). In terms of processing, N-glycosylated. Post-translationally, during unfolded protein response, a fragment of approximately 60 kDa containing the cytoplasmic transcription factor domain is released by proteolysis. The cleavage is probably performed sequentially by site-1 (MBTPS1, S1P) and site-2 (MBTPS2, S2P) proteases.

It localises to the endoplasmic reticulum membrane. It is found in the nucleus. Its function is as follows. Precursor of the transcription factor form (Processed cyclic AMP-dependent transcription factor ATF-6 beta), which is embedded in the endoplasmic reticulum membrane. Endoplasmic reticulum stress promotes processing of this form, releasing the transcription factor form that translocates into the nucleus, where it activates transcription of genes involved in the unfolded protein response (UPR). In terms of biological role, transcription factor that acts in the unfolded protein response (UPR) pathway by activating UPR target genes induced during ER stress. Binds DNA on the 5'-CCAC[GA]-3' half of the ER stress response element (ERSE) (5'-CCAATN(9)CCAC[GA]-3') when NF-Y is bound to ERSE. In Mus musculus (Mouse), this protein is Cyclic AMP-dependent transcription factor ATF-6 beta (Atf6b).